The chain runs to 185 residues: Ribosome-recycling factor (185 aa).

This sequence belongs to the RRF family.

The protein resides in the cytoplasm. Its function is as follows. Responsible for the release of ribosomes from messenger RNA at the termination of protein biosynthesis. May increase the efficiency of translation by recycling ribosomes from one round of translation to another. This chain is Ribosome-recycling factor, found in Methylococcus capsulatus (strain ATCC 33009 / NCIMB 11132 / Bath).